Reading from the N-terminus, the 361-residue chain is Probable dual-specificity RNA methyltransferase RlmN (361 aa).

Glu102 acts as the Proton acceptor in catalysis. In terms of domain architecture, Radical SAM core spans 108-344 (SGDRLTVCVS…VRWSKGLGAD (237 aa)). An intrachain disulfide couples Cys115 to Cys347. [4Fe-4S] cluster-binding residues include Cys122, Cys126, and Cys129. S-adenosyl-L-methionine is bound by residues 169-170 (GE), Ser199, 228-230 (SLH), and Asn304. Catalysis depends on Cys347, which acts as the S-methylcysteine intermediate.

It belongs to the radical SAM superfamily. RlmN family. [4Fe-4S] cluster serves as cofactor.

The protein localises to the cytoplasm. It catalyses the reaction adenosine(2503) in 23S rRNA + 2 reduced [2Fe-2S]-[ferredoxin] + 2 S-adenosyl-L-methionine = 2-methyladenosine(2503) in 23S rRNA + 5'-deoxyadenosine + L-methionine + 2 oxidized [2Fe-2S]-[ferredoxin] + S-adenosyl-L-homocysteine. It carries out the reaction adenosine(37) in tRNA + 2 reduced [2Fe-2S]-[ferredoxin] + 2 S-adenosyl-L-methionine = 2-methyladenosine(37) in tRNA + 5'-deoxyadenosine + L-methionine + 2 oxidized [2Fe-2S]-[ferredoxin] + S-adenosyl-L-homocysteine. Its function is as follows. Specifically methylates position 2 of adenine 2503 in 23S rRNA and position 2 of adenine 37 in tRNAs. The polypeptide is Probable dual-specificity RNA methyltransferase RlmN (Synechococcus elongatus (strain ATCC 33912 / PCC 7942 / FACHB-805) (Anacystis nidulans R2)).